A 561-amino-acid chain; its full sequence is Chaperonin GroEL 1 (561 aa).

Residues 29-32 (TMGP), 86-90 (DGTTT), Gly-413, and Asp-495 contribute to the ATP site.

The protein belongs to the chaperonin (HSP60) family. Forms a cylinder of 14 subunits composed of two heptameric rings stacked back-to-back. Interacts with the co-chaperonin GroES.

Its subcellular location is the cytoplasm. The enzyme catalyses ATP + H2O + a folded polypeptide = ADP + phosphate + an unfolded polypeptide.. Its function is as follows. Together with its co-chaperonin GroES, plays an essential role in assisting protein folding. The GroEL-GroES system forms a nano-cage that allows encapsulation of the non-native substrate proteins and provides a physical environment optimized to promote and accelerate protein folding. In Trichodesmium erythraeum (strain IMS101), this protein is Chaperonin GroEL 1.